Consider the following 822-residue polypeptide: AP-1 complex subunit gamma-1 (822 aa).

Residues 597–628 form a disordered region; that stretch reads EIVQTNGETEPAPLETKPPPSGPQPTSQANDL. The region spanning 702-817 is the GAE domain; it reads AGIPSITAYS…QDLAEVNNFP (116 aa).

Belongs to the adaptor complexes large subunit family. Adaptor protein complex 1 (AP-1) is a heterotetramer composed of two large adaptins (gamma-type subunit AP1G1 and beta-type subunit AP1B1), a medium adaptin (mu-type subunit AP1M1 or AP1M2) and a small adaptin (sigma-type subunit AP1S1 or AP1S2 or AP1S3). Interacts (via GAE domain) with RABEP1. Interacts with EPS15. Interacts with SYNRG/gamma-synergin. Interacts (via GAE domain) with AP1AR (via coiled-coil domain). Interacts with CLN3 (via dileucine motif); this interaction facilitates lysosomal targeting. Interacts (via GAE domain) with AFTPH/aftiphilin; the interaction is required to recruit AFTPH/aftiphilin to the perinuclear region of the cell.

It is found in the golgi apparatus. It localises to the cytoplasmic vesicle. The protein resides in the clathrin-coated vesicle membrane. The protein localises to the cytoplasm. Its subcellular location is the perinuclear region. It is found in the clathrin-coated vesicle. It localises to the membrane. The protein resides in the clathrin-coated pit. Subunit of clathrin-associated adaptor protein complex 1 that plays a role in protein sorting in the late-Golgi/trans-Golgi network (TGN) and/or endosomes. The AP complexes mediate both the recruitment of clathrin to membranes and the recognition of sorting signals within the cytosolic tails of transmembrane cargo molecules. In association with AFTPH/aftiphilin in the aftiphilin/p200/gamma-synergin complex, involved in the trafficking of transferrin from early to recycling endosomes, and the membrane trafficking of furin and the lysosomal enzyme cathepsin D between the trans-Golgi network (TGN) and endosomes. The protein is AP-1 complex subunit gamma-1 (AP1G1) of Pongo abelii (Sumatran orangutan).